The following is a 519-amino-acid chain: 6-phosphofructo-2-kinase/fructose-2,6-bisphosphatase 2 (519 aa).

Positions 1–17 are enriched in polar residues; the sequence is MSENSTFSTEDSCNSSY. The disordered stretch occupies residues 1 to 22; the sequence is MSENSTFSTEDSCNSSYKPHAS. Residue serine 2 is modified to N-acetylserine. The tract at residues 2–251 is 6-phosphofructo-2-kinase; that stretch reads SENSTFSTED…VYYLMNIHVH (250 aa). A Phosphoserine; by PKA modification is found at serine 32. Residue 48-56 coordinates ATP; it reads GLPARGKTY. Arginine 81 and arginine 105 together coordinate beta-D-fructose 6-phosphate. Aspartate 131 is a catalytic residue. The beta-D-fructose 6-phosphate site is built by threonine 133 and arginine 139. Cysteine 161 is an active-site residue. 170 to 175 contacts ATP; sequence NILEVK. The beta-D-fructose 6-phosphate site is built by lysine 175, arginine 196, and tyrosine 200. Residues 252–519 form a fructose-2,6-bisphosphatase region; it reads PRTIYLCRHG…PKTQVSIPVV (268 aa). Beta-D-fructose 2,6-bisphosphate is bound at residue arginine 259. Histidine 260 acts as the Tele-phosphohistidine intermediate in catalysis. 2 residues coordinate beta-D-fructose 2,6-bisphosphate: asparagine 266 and glycine 272. The Proton donor/acceptor role is filled by glutamate 329. Tyrosine 340, arginine 354, lysine 358, tyrosine 369, glutamine 395, and arginine 399 together coordinate beta-D-fructose 2,6-bisphosphate. Residue 351-354 coordinates ATP; the sequence is FALR. ATP contacts are provided by residues 395-399 and tyrosine 431; that span reads QAVMR. Positions 448 to 493 are disordered; the sequence is HRDKPTHNFPKSQTPVRMRRNSFTPLSSSNTIRRPRNYSVGSRPLK. A compositionally biased stretch (polar residues) spans 456–479; the sequence is FPKSQTPVRMRRNSFTPLSSSNTI. Serine 469 is subject to Phosphoserine. A Phosphothreonine modification is found at threonine 471. A Phosphothreonine; by PKC modification is found at threonine 478. Phosphoserine is present on residues serine 486 and serine 496. A disordered region spans residues 500-519; it reads ALDMQEGADQPKTQVSIPVV. Positions 510–519 are enriched in polar residues; it reads PKTQVSIPVV.

It in the C-terminal section; belongs to the phosphoglycerate mutase family. In terms of assembly, homodimer. Forms a heterodimer with PFKFB3. In terms of processing, phosphorylation by AMPK stimulates activity. In terms of tissue distribution, highest levels in kidney; also found in heart, brain, spleen, lung, liver, skeletal muscle and testis.

It carries out the reaction beta-D-fructose 2,6-bisphosphate + H2O = beta-D-fructose 6-phosphate + phosphate. The catalysed reaction is beta-D-fructose 6-phosphate + ATP = beta-D-fructose 2,6-bisphosphate + ADP + H(+). Its activity is regulated as follows. Phosphorylation results in the activation of the kinase activity. Its function is as follows. Synthesis and degradation of fructose 2,6-bisphosphate. The polypeptide is 6-phosphofructo-2-kinase/fructose-2,6-bisphosphatase 2 (Pfkfb2) (Mus musculus (Mouse)).